The chain runs to 1338 residues: MKHIKNEREEVFLEDDQAQHSQAELLSSKDENLQPSIPLSPVAFELDFSGNFQFISDNSSELLDIPKDKIIGHSVAEVLGTDGYNAFMRAVNCLLKDDSHSYHVRFQHSINANHANQNYYTAKGDLPSDEKITKPFDAIGILIRHPGSAIPAHTMWVVNPATNSLGSVSPLVTKLLDVIGFGASLLDKYLCDLRTSYHKHNSLDALPLPTPEFCQICEREIQSWFFELHSKFCLSTSTYESVVQAAQDSLLYFRSTLLEIQEGMQKDSSLVPVYKNEPLIVDADDYFFTDENKQTLSLCSFLSQVMYYLEVAIDITIPPVKIIVNFDKVDSLRVQSPRSEKATIELDNYNPSLENCSSAVIALWEDIKTAVDTKITGVLRLRNAIYYSERIRLEIDHHVQEIIDDVVSNLVTNHSSTSLGHLESKLAPSITFPDACDALEAEECITRPGSATNTPQSDRSLDINDLSRSSSYSRHLSHVSLSNPDFAIGSPMSQDSSNYSSPLHRRKASDSNFSDPRFDDLKYLSPNSSPRFVASDGPNRPASNGRSSLFSRGRASNLGDVGLRLPSPSPRIHTIVPNSAPEHPSINDYKILKPISKGAFGSVYLAQKRTTGDYFAIKILKKSNMIAKNQVINVRAERAILMSQGESPFVAKLYYTFQSKDYLYLVMEYLNGGDCGSLLKTMGVLDLDWIRTYIAETVLCLGDLHDRGIIHRDIKPENLLISQNGHLKLTDFGLSRVGYMKRHRRKQSSSIPVLDLRDRSSAISDLSLSTASSVLEAQSLITPERPKRPSLNEKLLSLDGTSIRLAGQSFNYENSAEDSPTATNTPTSQVDESNIFRSTDSPRVQPFFENKDPSKRFIGTPDYIAPEVILGNPGIKASDWWSLGCVVFEFLFGYPPFNAETPDQVFQNILARRINWPAEVFTAESSVALDLIDRLLCMNPANRLGANGVEEIKAHPFFKSVNWDTILEEDPPFVPKPFSPEDTVYFDSRGLKGFDFSEYYNQPTVTEAQKLEEERPASSIPQHVSGNRKGRLRSNTISTPEFGSFTYRNLDFLNKANRNTIQKLRKEHMAVKSAKTSVDDTFSQYMSRFKAKLSTSQSVGPVKSSRRASMADYEASTTTRVQDITTDSIDSIDDFDSLKEGRMLSFFDNLALEDHKGVSSTMSASQSQSSMHTALPDVTEGTSSDEHTTIQKGRIDNLQAQSLTHKRNAISYPGLFQLDRLQMIIPKDEIELAEILKKIFPKLTLVLIDDPWSILKKLLQNEQFNVVFLHFGNDKVSSSRLMYSVRTSATINSRVPFVYICEDETCIPTDLQSDGVLLKPITCENIESCLRKLDVWHS.

Positions Ser28–Asp98 constitute a PAS domain. Residues Pro484–Arg554 are disordered. The span at Pro491 to Ser501 shows a compositional bias: polar residues. Ser525 carries the phosphoserine modification. Polar residues predominate over residues Pro541–Phe550. The region spanning Tyr589–Phe958 is the Protein kinase domain. ATP contacts are provided by residues Ile595–Val603 and Lys618. Catalysis depends on Asp713, which acts as the Proton acceptor. Ser748 bears the Phosphoserine mark. A compositionally biased stretch (polar residues) spans Glu813–Pro842. Disordered stretches follow at residues Glu813–Val844, Lys1010–Asn1035, and Ser1159–Asp1185. In terms of domain architecture, AGC-kinase C-terminal spans Lys959–Asn1057. The segment covering Ser1159–Ala1174 has biased composition (low complexity). Residue Ser1211 is modified to Phosphoserine.

The protein belongs to the protein kinase superfamily. Ser/Thr protein kinase family.

The enzyme catalyses L-seryl-[protein] + ATP = O-phospho-L-seryl-[protein] + ADP + H(+). It carries out the reaction L-threonyl-[protein] + ATP = O-phospho-L-threonyl-[protein] + ADP + H(+). Its function is as follows. May facilitate the progression of anaphase through direct or indirect interaction with the cut8 protein. This Schizosaccharomyces pombe (strain 972 / ATCC 24843) (Fission yeast) protein is Serine/threonine-protein kinase cek1 (cek1).